Consider the following 521-residue polypeptide: Cytochrome P450 1A1 (521 aa).

F229 serves as a coordination point for substrate. C463 is a heme binding site.

The protein belongs to the cytochrome P450 family. It depends on heme as a cofactor.

It is found in the endoplasmic reticulum membrane. The protein localises to the microsome membrane. It carries out the reaction an organic molecule + reduced [NADPH--hemoprotein reductase] + O2 = an alcohol + oxidized [NADPH--hemoprotein reductase] + H2O + H(+). In terms of biological role, cytochromes P450 are a group of heme-thiolate monooxygenases. They oxidize a variety of structurally unrelated compounds, including steroids, fatty acids, and xenobiotics. The sequence is that of Cytochrome P450 1A1 (cyp1a1) from Chaetodon capistratus (Four-eye butterflyfish).